We begin with the raw amino-acid sequence, 103 residues long: NADH-quinone oxidoreductase subunit K (103 aa).

3 consecutive transmembrane segments (helical) span residues 1-21 (MIVP…VGGV), 29-49 (ILLI…AFAG), and 62-82 (AVII…ALLV). Residues 84–103 (GRRGGGTDRADSYDRLGEES) are disordered. The span at 88 to 103 (GGTDRADSYDRLGEES) shows a compositional bias: basic and acidic residues.

The protein belongs to the complex I subunit 4L family. NDH-1 is composed of 14 different subunits. Subunits NuoA, H, J, K, L, M, N constitute the membrane sector of the complex.

It localises to the cell inner membrane. The enzyme catalyses a quinone + NADH + 5 H(+)(in) = a quinol + NAD(+) + 4 H(+)(out). NDH-1 shuttles electrons from NADH, via FMN and iron-sulfur (Fe-S) centers, to quinones in the respiratory chain. The immediate electron acceptor for the enzyme in this species is believed to be ubiquinone. Couples the redox reaction to proton translocation (for every two electrons transferred, four hydrogen ions are translocated across the cytoplasmic membrane), and thus conserves the redox energy in a proton gradient. This Solidesulfovibrio magneticus (strain ATCC 700980 / DSM 13731 / RS-1) (Desulfovibrio magneticus) protein is NADH-quinone oxidoreductase subunit K.